Consider the following 151-residue polypeptide: D-aminoacyl-tRNA deacylase (151 aa).

The Gly-cisPro motif, important for rejection of L-amino acids signature appears at 137 to 138; sequence GP.

It belongs to the DTD family. Homodimer.

The protein resides in the cytoplasm. It catalyses the reaction glycyl-tRNA(Ala) + H2O = tRNA(Ala) + glycine + H(+). The catalysed reaction is a D-aminoacyl-tRNA + H2O = a tRNA + a D-alpha-amino acid + H(+). In terms of biological role, an aminoacyl-tRNA editing enzyme that deacylates mischarged D-aminoacyl-tRNAs. Also deacylates mischarged glycyl-tRNA(Ala), protecting cells against glycine mischarging by AlaRS. Acts via tRNA-based rather than protein-based catalysis; rejects L-amino acids rather than detecting D-amino acids in the active site. By recycling D-aminoacyl-tRNA to D-amino acids and free tRNA molecules, this enzyme counteracts the toxicity associated with the formation of D-aminoacyl-tRNA entities in vivo and helps enforce protein L-homochirality. The sequence is that of D-aminoacyl-tRNA deacylase from Fusobacterium nucleatum subsp. nucleatum (strain ATCC 25586 / DSM 15643 / BCRC 10681 / CIP 101130 / JCM 8532 / KCTC 2640 / LMG 13131 / VPI 4355).